The following is a 334-amino-acid chain: Atypical chemokine receptor 1 (334 aa).

The Extracellular portion of the chain corresponds to 1 to 61; that stretch reads MGNCLYPVET…CNLLDRSSLP (61 aa). Residues asparagine 16, asparagine 26, and asparagine 32 are each glycosylated (N-linked (GlcNAc...) asparagine). 2 cysteine pairs are disulfide-bonded: cysteine 49-cysteine 274 and cysteine 127-cysteine 193. Residues 62-82 form a helical membrane-spanning segment; it reads FFMLTSVLGMLASGSILFAIL. Over 83-93 the chain is Cytoplasmic; it reads RPFFHWQICPS. Residues 94-114 form a helical membrane-spanning segment; that stretch reads WPILAELAVGSALFSIAVPIL. Residues 115 to 127 are Extracellular-facing; it reads APGLHSAHSTALC. The helical transmembrane segment at 128-151 threads the bilayer; the sequence is NLGYWVWYTSAFAQALLIGCYACL. The Cytoplasmic portion of the chain corresponds to 152 to 164; sequence NPRLNIGQLRGFT. A helical transmembrane segment spans residues 165-185; it reads LGLSVGLWGAAALSGLPVALA. Residues 186 to 205 lie on the Extracellular side of the membrane; sequence SDVYNGFCTFPSSRDMEALK. Residues 206-226 form a helical membrane-spanning segment; it reads YTHYAICFTIFTVLPLTLLAA. Residues 227 to 242 are Cytoplasmic-facing; the sequence is KGLKIALSKGPGPWVS. The chain crosses the membrane as a helical span at residues 243–263; the sequence is VLWIWFIFWWPHGMVLIFDAL. At 264–285 the chain is on the extracellular side; the sequence is VRSKTVLLYTCQSQKILDAMLN. A glycan (N-linked (GlcNAc...) asparagine) is linked at asparagine 285. A helical transmembrane segment spans residues 286–306; the sequence is VTEALSMLHCVATPLLLALFC. The Cytoplasmic portion of the chain corresponds to 307–334; that stretch reads HQTTRRSLSSLSLPTRQASQMDALAGKS.

This sequence belongs to the G-protein coupled receptor 1 family. Atypical chemokine receptor subfamily. Expressed in liver and brain.

The protein localises to the early endosome. The protein resides in the recycling endosome. It is found in the membrane. In terms of biological role, atypical chemokine receptor that controls chemokine levels and localization via high-affinity chemokine binding that is uncoupled from classic ligand-driven signal transduction cascades, resulting instead in chemokine sequestration, degradation, or transcytosis. Also known as interceptor (internalizing receptor) or chemokine-scavenging receptor or chemokine decoy receptor. Has a promiscuous chemokine-binding profile, interacting with inflammatory chemokines of both the CXC and the CC subfamilies but not with homeostatic chemokines. Acts as a receptor for chemokines including CCL2, CCL5, CCL7, CCL11, CCL13, CCL14, CCL17, CXCL5, CXCL6, IL8/CXCL8, CXCL11, GRO, RANTES, MCP-1 and TARC. May regulate chemokine bioavailability and, consequently, leukocyte recruitment through two distinct mechanisms: when expressed in endothelial cells, it sustains the abluminal to luminal transcytosis of tissue-derived chemokines and their subsequent presentation to circulating leukocytes; when expressed in erythrocytes, serves as blood reservoir of cognate chemokines but also as a chemokine sink, buffering potential surges in plasma chemokine levels. Functionally, (Microbial infection) Acts as a receptor for the malaria parasite Plasmodium yoelii in mature erythrocytes but not reticulocytes. The chain is Atypical chemokine receptor 1 (Ackr1) from Mus musculus (Mouse).